Consider the following 120-residue polypeptide: Ribosome-binding factor A (120 aa).

This sequence belongs to the RbfA family. In terms of assembly, monomer. Binds 30S ribosomal subunits, but not 50S ribosomal subunits or 70S ribosomes.

It localises to the cytoplasm. Its function is as follows. One of several proteins that assist in the late maturation steps of the functional core of the 30S ribosomal subunit. Associates with free 30S ribosomal subunits (but not with 30S subunits that are part of 70S ribosomes or polysomes). Required for efficient processing of 16S rRNA. May interact with the 5'-terminal helix region of 16S rRNA. The chain is Ribosome-binding factor A from Desulforamulus reducens (strain ATCC BAA-1160 / DSM 100696 / MI-1) (Desulfotomaculum reducens).